Reading from the N-terminus, the 634-residue chain is UPF0329 protein ECU11_2090 (634 aa).

Basic and acidic residues-rich tracts occupy residues 354 to 365 (REEREKREESKG) and 397 to 407 (GESKEEDRGEE). The interval 354-438 (REEREKREES…KGSGEKRISE (85 aa)) is disordered. A compositionally biased stretch (acidic residues) spans 408 to 417 (GGVEAEDPLE).

This sequence belongs to the UPF0329 family.

The protein is UPF0329 protein ECU11_2090 of Encephalitozoon cuniculi (strain GB-M1) (Microsporidian parasite).